The following is a 294-amino-acid chain: Cytidine deaminase (294 aa).

CMP/dCMP-type deaminase domains follow at residues 48-168 (DDDA…FGPT) and 187-294 (AETD…RVTF). 89–91 (NME) contributes to the substrate binding site. His-102 is a binding site for Zn(2+). The active-site Proton donor is the Glu-104. The Zn(2+) site is built by Cys-129 and Cys-132.

This sequence belongs to the cytidine and deoxycytidylate deaminase family. In terms of assembly, homodimer. Requires Zn(2+) as cofactor.

It carries out the reaction cytidine + H2O + H(+) = uridine + NH4(+). It catalyses the reaction 2'-deoxycytidine + H2O + H(+) = 2'-deoxyuridine + NH4(+). This enzyme scavenges exogenous and endogenous cytidine and 2'-deoxycytidine for UMP synthesis. The sequence is that of Cytidine deaminase from Yersinia pseudotuberculosis serotype IB (strain PB1/+).